The chain runs to 155 residues: Small ribosomal subunit protein uS7cz/uS7cy (155 aa).

Belongs to the universal ribosomal protein uS7 family. Part of the 30S ribosomal subunit.

The protein resides in the plastid. Its function is as follows. One of the primary rRNA binding proteins, it binds directly to 16S rRNA where it nucleates assembly of the head domain of the 30S subunit. This chain is Small ribosomal subunit protein uS7cz/uS7cy (rps7-A), found in Epifagus virginiana (Beechdrops).